Here is a 297-residue protein sequence, read N- to C-terminus: Putative heme-binding peroxidase (297 aa).

The Proton acceptor role is filled by His74. His198 is a binding site for heme b. Trp214 (tryptophan radical intermediate) is an active-site residue.

This sequence belongs to the peroxidase family. Cytochrome c peroxidase subfamily. It depends on heme b as a cofactor.

Destroys radicals which are normally produced within the cells and which are toxic to biological systems. This Yarrowia lipolytica (strain CLIB 122 / E 150) (Yeast) protein is Putative heme-binding peroxidase.